Here is an 892-residue protein sequence, read N- to C-terminus: Putative GTP diphosphokinase RSH1, chloroplastic (892 aa).

A chloroplast-targeting transit peptide spans 1–52 (MQPPTGAVSGSSSSSLECVSSCRTSWRGGGRPYECSVLSCAWNAPRALTGAL). Residues 184–291 (FIIHPVEVAR…VKLADRLHNM (108 aa)) enclose the HD domain. One can recognise a TGS domain in the interval 574–637 (LGSRVFVFTP…ANAEVVEIII (64 aa)). One can recognise an ACT domain in the interval 809–880 (WLCIVCVDRK…MILGVLGWSV (72 aa)).

Belongs to the RelA/SpoT family.

The protein localises to the plastid. Its subcellular location is the chloroplast. It carries out the reaction GTP + ATP = guanosine 3'-diphosphate 5'-triphosphate + AMP. Its function is as follows. May be involved in a rapid plant ppGpp (guanosine 3'-diphosphate 5'-diphosphate)-mediated response to pathogens and other stresses. This chain is Putative GTP diphosphokinase RSH1, chloroplastic (RSH1), found in Oryza sativa subsp. japonica (Rice).